A 90-amino-acid polypeptide reads, in one-letter code: Large ribosomal subunit protein uL23c (90 aa).

This sequence belongs to the universal ribosomal protein uL23 family. As to quaternary structure, part of the 50S ribosomal subunit.

It is found in the plastid. The protein resides in the chloroplast. Binds to 23S rRNA. The sequence is that of Large ribosomal subunit protein uL23c (rpl23) from Tetradesmus obliquus (Green alga).